The sequence spans 387 residues: MKFTNLSLLALSASLASARFVEQHETDQVILNSNAVTDERYLIETAPGKQQWVTEEEKWELRRNGQNFMDITETPELGTLRTSSVKVKFPSKPTLQKDLKPLLEDLSKSKMHKNLETFTSFHTRYYKSDYGRQSSEWLLEQVQTLIKDAGADKYGAHARHFKHSWGQNSIIATIPGQKNSTVVIGAHQDSINLFLPSILSAPGADDDGSGTVTILEALRVLLTSKDIIKGKGENTIEFHWYSAEEGGLLGSQAIFSEYEKTGRDVKAMLQQDMTGYTQKTLDAGEPESVGVITDFVDPDLTDFIKKIVTEYCTIDFVETRCGYACSDHASASKAGYPSAFVIESDFKYSDDRIHTSGDTLNFLNFDHMLQHARLTLGLVYELAFAKL.

The signal sequence occupies residues 1–18 (MKFTNLSLLALSASLASA). The propeptide occupies 19–86 (RFVEQHETDQ…LGTLRTSSVK (68 aa)). A glycan (N-linked (GlcNAc...) asparagine) is linked at Asn-179. 4 residues coordinate Zn(2+): His-187, Asp-206, Glu-245, and Asp-272. A disulfide bond links Cys-321 and Cys-325. Residue His-354 coordinates Zn(2+).

The protein belongs to the peptidase M28 family. M28E subfamily. As to quaternary structure, monomer. The cofactor is Zn(2+).

It is found in the secreted. Functionally, extracellular aminopeptidase that allows assimilation of proteinaceous substrates. The polypeptide is Leucine aminopeptidase 1 (lap1) (Sclerotinia sclerotiorum (strain ATCC 18683 / 1980 / Ss-1) (White mold)).